A 154-amino-acid polypeptide reads, in one-letter code: Ribonuclease H (154 aa).

In terms of domain architecture, RNase H type-1 spans 1–142 (MEKTVEIYTD…VDDLARDAAG (142 aa)). Asp10, Glu48, Asp70, and Asp134 together coordinate Mg(2+).

The protein belongs to the RNase H family. In terms of assembly, monomer. It depends on Mg(2+) as a cofactor.

It localises to the cytoplasm. The enzyme catalyses Endonucleolytic cleavage to 5'-phosphomonoester.. In terms of biological role, endonuclease that specifically degrades the RNA of RNA-DNA hybrids. This is Ribonuclease H from Pseudoalteromonas translucida (strain TAC 125).